Reading from the N-terminus, the 428-residue chain is Ribulose bisphosphate carboxylase (428 aa).

Lys151 functions as the Proton acceptor in the catalytic mechanism. Lys153 contributes to the substrate binding site. Mg(2+)-binding residues include Lys177, Asp179, and Glu180. An N6-carboxylysine modification is found at Lys177. Catalysis depends on His270, which acts as the Proton acceptor. Substrate-binding positions include Arg271, His303, 354-356, and 376-379; these read SGG and QFGG.

Belongs to the RuBisCO large chain family. Type III subfamily. As to quaternary structure, homodimer or homodecamer. In contrast to form I RuBisCO, the form III RuBisCO is composed solely of large subunits. Mg(2+) is required as a cofactor.

It carries out the reaction 2 (2R)-3-phosphoglycerate + 2 H(+) = D-ribulose 1,5-bisphosphate + CO2 + H2O. The enzyme catalyses D-ribulose 1,5-bisphosphate + O2 = 2-phosphoglycolate + (2R)-3-phosphoglycerate + 2 H(+). Functionally, catalyzes the addition of molecular CO(2) and H(2)O to ribulose 1,5-bisphosphate (RuBP), generating two molecules of 3-phosphoglycerate (3-PGA). Functions in an archaeal AMP degradation pathway, together with AMP phosphorylase and R15P isomerase. This Methanosarcina mazei (strain ATCC BAA-159 / DSM 3647 / Goe1 / Go1 / JCM 11833 / OCM 88) (Methanosarcina frisia) protein is Ribulose bisphosphate carboxylase.